Here is a 196-residue protein sequence, read N- to C-terminus: RNA-free ribonuclease P (196 aa).

This sequence belongs to the HARP family.

The enzyme catalyses Endonucleolytic cleavage of RNA, removing 5'-extranucleotides from tRNA precursor.. Its function is as follows. RNA-free RNase P that catalyzes the removal of the 5'-leader sequence from pre-tRNA to produce the mature 5'-terminus. This is RNA-free ribonuclease P from Thermodesulfovibrio yellowstonii (strain ATCC 51303 / DSM 11347 / YP87).